The primary structure comprises 262 residues: Phosphonates import ATP-binding protein PhnC (262 aa).

Residues 5–253 (IRVEKLAKTF…RFDHLYRSIN (249 aa)) enclose the ABC transporter domain. An ATP-binding site is contributed by 37–44 (GPSGSGKS).

It belongs to the ABC transporter superfamily. Phosphonates importer (TC 3.A.1.9.1) family. As to quaternary structure, the complex is composed of two ATP-binding proteins (PhnC), two transmembrane proteins (PhnE) and a solute-binding protein (PhnD).

The protein localises to the cell inner membrane. The catalysed reaction is phosphonate(out) + ATP + H2O = phosphonate(in) + ADP + phosphate + H(+). Part of the ABC transporter complex PhnCDE involved in phosphonates import. Responsible for energy coupling to the transport system. In Shigella flexneri serotype 5b (strain 8401), this protein is Phosphonates import ATP-binding protein PhnC.